The primary structure comprises 142 residues: Nucleoside diphosphate kinase (142 aa).

Lys-11, Phe-59, Arg-87, Thr-93, Arg-104, and Asn-114 together coordinate ATP. His-117 functions as the Pros-phosphohistidine intermediate in the catalytic mechanism.

Belongs to the NDK family. Homotetramer. Mg(2+) is required as a cofactor.

Its subcellular location is the cytoplasm. It catalyses the reaction a 2'-deoxyribonucleoside 5'-diphosphate + ATP = a 2'-deoxyribonucleoside 5'-triphosphate + ADP. The enzyme catalyses a ribonucleoside 5'-diphosphate + ATP = a ribonucleoside 5'-triphosphate + ADP. Its function is as follows. Major role in the synthesis of nucleoside triphosphates other than ATP. The ATP gamma phosphate is transferred to the NDP beta phosphate via a ping-pong mechanism, using a phosphorylated active-site intermediate. The protein is Nucleoside diphosphate kinase of Hahella chejuensis (strain KCTC 2396).